The primary structure comprises 187 residues: UPF0301 protein YqgE (187 aa).

It belongs to the UPF0301 (AlgH) family.

This Salmonella paratyphi A (strain ATCC 9150 / SARB42) protein is UPF0301 protein YqgE.